Consider the following 172-residue polypeptide: Small ribosomal subunit protein uS5 (172 aa).

The region spanning 17–80 (LREKMISVNR…EQARRNMFKV (64 aa)) is the S5 DRBM domain.

It belongs to the universal ribosomal protein uS5 family. In terms of assembly, part of the 30S ribosomal subunit. Contacts proteins S4 and S8.

With S4 and S12 plays an important role in translational accuracy. In terms of biological role, located at the back of the 30S subunit body where it stabilizes the conformation of the head with respect to the body. The protein is Small ribosomal subunit protein uS5 of Paraburkholderia phytofirmans (strain DSM 17436 / LMG 22146 / PsJN) (Burkholderia phytofirmans).